A 493-amino-acid chain; its full sequence is Solute carrier family 2, facilitated glucose transporter member 3 (493 aa).

Over 1-10 (MGTTKVTPSL) the chain is Cytoplasmic. A helical membrane pass occupies residues 11–32 (VFAVTVATIGSFQFGYNTGVIN). At 33–64 (APETILKDFLNYTLEERLEDLPSEGLLTALWS) the chain is on the extracellular side. Asparagine 43 is a glycosylation site (N-linked (GlcNAc...) asparagine). The helical transmembrane segment at 65–85 (LCVAIFSVGGMIGSFSVGLFV) threads the bilayer. The Cytoplasmic segment spans residues 86-90 (NRFGR). Residues 91 to 111 (RNSMLLVNLLAIIAGCLMGFA) form a helical membrane-spanning segment. Topologically, residues 112–118 (KIAESVE) are extracellular. A helical membrane pass occupies residues 119-142 (MLILGRLLIGIFCGLCTGFVPMYI). Residues 143–153 (GEVSPTALRGA) lie on the Cytoplasmic side of the membrane. Residues 154–174 (FGTLNQLGIVVGILVAQIFGL) form a helical membrane-spanning segment. Residue glutamine 159 coordinates D-glucose. Residues 175 to 183 (DFILGSEEL) lie on the Extracellular side of the membrane. A helical transmembrane segment spans residues 184–204 (WPGLLGLTIIPAILQSAALPF). Residues 205 to 269 (CPESPRFLLI…LFRSPNYVQP (65 aa)) lie on the Cytoplasmic side of the membrane. A Phosphothreonine modification is found at threonine 232. The chain crosses the membrane as a helical span at residues 270 to 290 (LLISIVLQLSQQLSGINAVFY). Residues 277–279 (QLS) form an important for selectivity against fructose region. Residues 280–281 (QQ) and asparagine 286 each bind D-glucose. Residues 291 to 304 (YSTGIFKDAGVQEP) lie on the Extracellular side of the membrane. Residues 305–325 (IYATIGAGVVNTIFTVVSLFL) form a helical membrane-spanning segment. Asparagine 315 contributes to the D-glucose binding site. Topologically, residues 326–331 (VERAGR) are cytoplasmic. The helical transmembrane segment at 332–352 (RTLHMIGLGGMAVCSVFMTIS) threads the bilayer. At 353-363 (LLLKDDYEAMS) the chain is on the extracellular side. The chain crosses the membrane as a helical span at residues 364–389 (FVCIVAILIYVAFFEIGPGPIPWFIV). D-glucose-binding residues include glutamate 378 and tryptophan 386. Residues 390-399 (AELFSQGPRP) lie on the Cytoplasmic side of the membrane. The chain crosses the membrane as a helical span at residues 400-420 (AAIAVAGCCNWTSNFLVGMLF). The Extracellular segment spans residues 421–429 (PSAAAYLGA). The chain crosses the membrane as a helical span at residues 430-450 (YVFIIFAAFLIFFLIFTFFKV). At 451-493 (PETKGRTFEDIARAFEGQAHSGKGPAGVELNSMQPVKETPGNA) the chain is on the cytoplasmic side. Residues 469-493 (AHSGKGPAGVELNSMQPVKETPGNA) form a disordered region. Phosphoserine occurs at positions 471 and 482. Position 489 is a phosphothreonine (threonine 489).

It belongs to the major facilitator superfamily. Sugar transporter (TC 2.A.1.1) family. Glucose transporter subfamily. In terms of assembly, interacts with SMIM43; the interaction may promote SLC2A3-mediated glucose transport to meet the energy needs of mesendoderm differentiation. In terms of tissue distribution, expressed in spermatozoa (at protein level). Detected in brain (at protein level). Abundantly expressed in the hippocampus, cerebellum and cerebral cortex with lower expression in the dentate gyrus and piriform cortex.

The protein localises to the cell membrane. It is found in the perikaryon. The protein resides in the cell projection. It catalyses the reaction D-glucose(out) = D-glucose(in). It carries out the reaction D-galactose(in) = D-galactose(out). Its activity is regulated as follows. Deoxyglucose transport is inhibited by D-glucose, D-galactose and maltose. Galactose transport is inhibited by D-glucose and maltose. Functionally, facilitative glucose transporter. Can also mediate the uptake of various other monosaccharides across the cell membrane. Mediates the uptake of glucose, 2-deoxyglucose, galactose, mannose, xylose and fucose, and probably also dehydroascorbate. Does not mediate fructose transport. Required for mesendoderm differentiation. This is Solute carrier family 2, facilitated glucose transporter member 3 from Mus musculus (Mouse).